The primary structure comprises 1075 residues: DNA-directed RNA polymerase subunit beta (1075 aa).

It belongs to the RNA polymerase beta chain family. As to quaternary structure, in plastids the minimal PEP RNA polymerase catalytic core is composed of four subunits: alpha, beta, beta', and beta''. When a (nuclear-encoded) sigma factor is associated with the core the holoenzyme is formed, which can initiate transcription.

Its subcellular location is the plastid. It localises to the chloroplast. It carries out the reaction RNA(n) + a ribonucleoside 5'-triphosphate = RNA(n+1) + diphosphate. DNA-dependent RNA polymerase catalyzes the transcription of DNA into RNA using the four ribonucleoside triphosphates as substrates. This Zea mays (Maize) protein is DNA-directed RNA polymerase subunit beta.